A 121-amino-acid polypeptide reads, in one-letter code: Flagellar protein FliT (121 aa).

Residues 1–50 (MNHAPHLYFAWQQLVEKSQLMLRLATEEQWDELIASEMAYVNAVQEIAHL) are required for homodimerization. The interval 60 to 98 (MQEQLRPMLRLILDNESKVKQLLQIRMDELAKLVGQSSV) is fliD binding.

The protein belongs to the FliT family. Homodimer. Interacts with FliD and FlhC.

It is found in the cytoplasm. Its subcellular location is the cytosol. Functionally, dual-function protein that regulates the transcription of class 2 flagellar operons and that also acts as an export chaperone for the filament-capping protein FliD. As a transcriptional regulator, acts as an anti-FlhDC factor; it directly binds FlhC, thus inhibiting the binding of the FlhC/FlhD complex to class 2 promoters, resulting in decreased expression of class 2 flagellar operons. As a chaperone, effects FliD transition to the membrane by preventing its premature polymerization, and by directing it to the export apparatus. This is Flagellar protein FliT from Escherichia coli (strain ATCC 8739 / DSM 1576 / NBRC 3972 / NCIMB 8545 / WDCM 00012 / Crooks).